Here is a 686-residue protein sequence, read N- to C-terminus: Rhophilin-2 (686 aa).

An REM-1 domain is found at 26-100 (NPLAQTGRSK…LEGLNISVGV (75 aa)). Residues 46–66 (QILKAVRMRTGAENLLKVATN) are interaction with Rho. In terms of domain architecture, BRO1 spans 111 to 502 (PLIPLGLKET…TDFFQKLGPL (392 aa)). The region spanning 515-593 (RGIHFTVEEG…EEVEMKVVSL (79 aa)) is the PDZ domain. Phosphothreonine is present on threonine 655.

It belongs to the RHPN family. In terms of assembly, interacts with GTP-bound RhoA and RhoB. Interacts with both GTP- and GDP-bound RhoA. Interacts with KRT18.

It localises to the cytoplasm. Its subcellular location is the perinuclear region. Functionally, binds specifically to GTP-Rho. May function in a Rho pathway to limit stress fiber formation and/or increase the turnover of F-actin structures in the absence of high levels of RhoA activity. The polypeptide is Rhophilin-2 (Rhpn2) (Mus musculus (Mouse)).